The following is a 567-amino-acid chain: SRSF protein kinase 3 (567 aa).

The segment covering 1 to 16 has biased composition (gly residues); that stretch reads MSASTGGGGDSGGSGG. The disordered stretch occupies residues 1 to 36; it reads MSASTGGGGDSGGSGGSSSSSQASCGPESSGSELAL. Low complexity predominate over residues 17–32; sequence SSSSSQASCGPESSGS. At S50 the chain carries Phosphoserine. The Protein kinase domain occupies 79-565; the sequence is YHVVRKLGWG…AADCLQHPWL (487 aa). Residues 85–93 and K108 contribute to the ATP site; that span reads LGWGHFSTV. D212 functions as the Proton acceptor in the catalytic mechanism. Disordered regions lie at residues 238–283 and 298–351; these read QQAG…RLLE and ATQA…SQTS. Residues 248–258 are compositionally biased toward polar residues; sequence SIVSTAPQEVL. Residues 264–279 are compositionally biased toward basic residues; sequence SKNKRKKMRRKRKQQK. Low complexity predominate over residues 327–348; that stretch reads AGPSPASSSPAPGGGRSLSAGS. The residue at position 330 (S330) is a Phosphoserine.

This sequence belongs to the protein kinase superfamily. CMGC Ser/Thr protein kinase family. Expressed in skeletal and heart muscle. Also expressed in the fetal brain.

The protein localises to the nucleus. It localises to the cytoplasm. It catalyses the reaction L-seryl-[protein] + ATP = O-phospho-L-seryl-[protein] + ADP + H(+). The catalysed reaction is L-threonyl-[protein] + ATP = O-phospho-L-threonyl-[protein] + ADP + H(+). Serine/arginine-rich protein-specific kinase which specifically phosphorylates its substrates at serine residues located in regions rich in arginine/serine dipeptides, known as RS domains. Phosphorylates the SR splicing factor SRSF1 and the lamin-B receptor (LBR) in vitro. Required for normal muscle development. This chain is SRSF protein kinase 3 (SRPK3), found in Homo sapiens (Human).